The following is a 293-amino-acid chain: Urease accessory protein UreD (293 aa).

Belongs to the UreD family. As to quaternary structure, ureD, UreF and UreG form a complex that acts as a GTP-hydrolysis-dependent molecular chaperone, activating the urease apoprotein by helping to assemble the nickel containing metallocenter of UreC. The UreE protein probably delivers the nickel.

It is found in the cytoplasm. In terms of biological role, required for maturation of urease via the functional incorporation of the urease nickel metallocenter. This Cupriavidus metallidurans (strain ATCC 43123 / DSM 2839 / NBRC 102507 / CH34) (Ralstonia metallidurans) protein is Urease accessory protein UreD.